Reading from the N-terminus, the 360-residue chain is MSELETLERTLLAEIEAAADEGAIEAVRVGALGKKGSISELLKTLGSMSAEERQTRGARINALKNTVSEAISARKAELKDAAIAERLARETVDISLPVRSSPAERGRIHPISQIVDEITAIFGDMGFSLAEGPDIETDYYNFTALNFPEGHPAREMHDTFFFAPDEKGERKVLRTHTSPVQIRTMEAEQPPIRIIIPGKTYRQDSDATHSPMFHQVEGLVIDRTANVANMRWVLEEFCKAFFEVDQVTMRFRPSFFPFTEPSFEVDIQCDRSGPIVKFGEGKDWMEILGCGMVHPNVLRAGGLDPDEFQGFAWGMGLDRIAMLKYGMPDLRDFFNADVRWMTHYGFRPLDMPTLFGGLSA.

E260 is a Mg(2+) binding site.

This sequence belongs to the class-II aminoacyl-tRNA synthetase family. Phe-tRNA synthetase alpha subunit type 1 subfamily. Tetramer of two alpha and two beta subunits. It depends on Mg(2+) as a cofactor.

Its subcellular location is the cytoplasm. The catalysed reaction is tRNA(Phe) + L-phenylalanine + ATP = L-phenylalanyl-tRNA(Phe) + AMP + diphosphate + H(+). This chain is Phenylalanine--tRNA ligase alpha subunit, found in Sinorhizobium medicae (strain WSM419) (Ensifer medicae).